Consider the following 29-residue polypeptide: Beta-theraphotoxin-Gr1b (29 aa).

Cystine bridges form between Cys-2-Cys-16, Cys-9-Cys-21, and Cys-15-Cys-25. Leu-29 bears the Leucine amide mark.

The protein belongs to the neurotoxin 30 (phrixotoxin) family. As to expression, expressed by the venom gland.

It localises to the secreted. Functionally, inhibits the voltage-gated sodium channels Nav1.1/SCN1A (IC(50)=360 nM), Nav1.2/SCN2A (IC(50)=600 nM), Nav1.3/SCN3A (IC(50)=1280), Nav1.4/SCN4A (IC(50)=330 nM), Nav1.6/SCN8A (IC(50)=1200 nM), Nav1.7/SCN9A (IC(50)=1-40 nM), and voltage-gated potassium channels Kv11.1/KCNH2 (IC(50)=4.8 uM). Induces analgesia in mammals. This analgesia is mediated by a non-opioid receptor related mechanism. In Grammostola rosea (Chilean rose tarantula), this protein is Beta-theraphotoxin-Gr1b.